The sequence spans 293 residues: MSLIDWFAARRKDQFVGKVSQDTDEGDGLWVKCSECSQVAYRKDLISNFNVCNNCGHHNRINSDERINIIADKNSFKEFDSLLSPTDPLGFKDRRAYADRIKESQAGTGLRDGVVTGICSVNSMPLALAVMDFRFMGGSMGSVVGEKITRIIERATLENFPILIVCASGGARMQEGMLSLMQMAKISGALKKHKEKNLLYMPLLTHPTTGGVTASFAMLGDLILAEPKALIGFAGRRVIEQTLREKLPDNFQTAEYLLEHGFVDVIVKRKDLKDTLTKILKIHGVKELAEANT.

The region spanning 29 to 293 (LWVKCSECSQ…GVKELAEANT (265 aa)) is the CoA carboxyltransferase N-terminal domain. The Zn(2+) site is built by Cys33, Cys36, Cys52, and Cys55. The C4-type zinc-finger motif lies at 33–55 (CSECSQVAYRKDLISNFNVCNNC).

Belongs to the AccD/PCCB family. In terms of assembly, acetyl-CoA carboxylase is a heterohexamer composed of biotin carboxyl carrier protein (AccB), biotin carboxylase (AccC) and two subunits each of ACCase subunit alpha (AccA) and ACCase subunit beta (AccD). Requires Zn(2+) as cofactor.

It is found in the cytoplasm. It catalyses the reaction N(6)-carboxybiotinyl-L-lysyl-[protein] + acetyl-CoA = N(6)-biotinyl-L-lysyl-[protein] + malonyl-CoA. It functions in the pathway lipid metabolism; malonyl-CoA biosynthesis; malonyl-CoA from acetyl-CoA: step 1/1. Functionally, component of the acetyl coenzyme A carboxylase (ACC) complex. Biotin carboxylase (BC) catalyzes the carboxylation of biotin on its carrier protein (BCCP) and then the CO(2) group is transferred by the transcarboxylase to acetyl-CoA to form malonyl-CoA. The chain is Acetyl-coenzyme A carboxylase carboxyl transferase subunit beta from Prochlorococcus marinus (strain AS9601).